Reading from the N-terminus, the 538-residue chain is BTB/POZ domain-containing protein 6 (538 aa).

Residues 1-17 (MLLPLACLHGRVAQCLT) form the signal peptide. Disordered regions lie at residues 29–53 (PRRGARARGAASTGAEAAPAAPPAK) and 76–115 (AAVGRKAGPRSPPSAPAPAPPPPAPAPPTLGNNHQESPGW). The segment covering 35–53 (ARGAASTGAEAAPAAPPAK) has biased composition (low complexity). Residues 85–103 (RSPPSAPAPAPPPPAPAPP) are compositionally biased toward pro residues. One can recognise a BTB domain in the interval 136 to 206 (ADVHFVVGPP…MYSDEIDLEA (71 aa)).

Expressed in lens.

It localises to the cytoplasm. Functionally, adapter protein for the cul3 E3 ubiquitin-protein ligase complex. Involved in late neuronal development and muscle formation. The protein is BTB/POZ domain-containing protein 6 of Homo sapiens (Human).